Here is a 317-residue protein sequence, read N- to C-terminus: MSITLSRPSLSRPSLSRHPSLTLHSSLSHAPPHHRPVAFLRHPTLRYHHHGRLLSVASAILQDTAIRQDTYIWTPVPISRVLPAAAESLFKVIVDLSRSPDLVYNFVSPGQYVQIRIPEAIVNPPPRPAYFYIASPPSLVKKNLEFEFLIRSVPGTTSEVLCSLKEGDVVDLTQIIGRGFDIEQILPPEDYPTVLISVTGYGMSAGRSFIEEGFGANKRSDVRLYYGAENLETMGYQERFKDWEASGVRVIPVLSRPPPNWNGAVGYVQDVYLKDKPIADPRTTGAVLIGNPNMVEETRGILVAQGVSREKILVTQD.

The tract at residues 1-29 (MSITLSRPSLSRPSLSRHPSLTLHSSLSH) is disordered. The 112-residue stretch at 71–182 (YIWTPVPISR…TQIIGRGFDI (112 aa)) folds into the FAD-binding FR-type domain.

The sequence is that of Fruit protein pKIWI502 from Actinidia deliciosa (Kiwi).